The chain runs to 137 residues: Protein Turandot X (137 aa).

Residues 1-24 form the signal peptide; that stretch reads MKVPVFQLSCLLCLIVCLLCSVKA.

The protein belongs to the Turandot family.

It is found in the secreted. Functionally, a humoral factor that may play a role in stress tolerance. The chain is Protein Turandot X from Drosophila persimilis (Fruit fly).